A 196-amino-acid chain; its full sequence is Probable GTP-binding protein EngB (196 aa).

The EngB-type G domain maps to 22–196; sequence NLPEIALAGR…GNWIEDKISQ (175 aa). Residues 30–37, 57–61, 75–78, 142–145, and 175–177 contribute to the GTP site; these read GRSNVGKS, GKTQT, DVPG, TKMD, and FSS. S37 and T59 together coordinate Mg(2+).

This sequence belongs to the TRAFAC class TrmE-Era-EngA-EngB-Septin-like GTPase superfamily. EngB GTPase family. Mg(2+) serves as cofactor.

In terms of biological role, necessary for normal cell division and for the maintenance of normal septation. The protein is Probable GTP-binding protein EngB of Lactobacillus acidophilus (strain ATCC 700396 / NCK56 / N2 / NCFM).